Consider the following 440-residue polypeptide: Transposon Ty1-LR2 Gag polyprotein (440 aa).

3 stretches are compositionally biased toward polar residues: residues 1–23 (MESQQLSQHSPISHGSACASVTS), 48–60 (TKANSQQTTTPAS), and 127–152 (QSQFPQYPSSVGTPLSTPSPESGNTF). 3 disordered regions span residues 1 to 93 (MESQ…MMTQ), 126 to 174 (PQSQ…PPPM), and 352 to 440 (GSRN…PGTY). A compositionally biased stretch (low complexity) spans 153–165 (TDSSSADSDMTST). Residues 299-401 (NNGIHINNKV…NSKSKTARAH (103 aa)) form an RNA-binding region. Over residues 402–418 (NVSTSNNSPSTDNDSIS) the composition is skewed to low complexity. A Phosphoserine modification is found at Ser-416. Positions 419–428 (KSTTEPIQLN) are enriched in polar residues. A compositionally biased stretch (basic and acidic residues) spans 429–440 (NKHDLHLRPGTY).

Homotrimer.

It is found in the cytoplasm. Its function is as follows. Capsid protein (CA) is the structural component of the virus-like particle (VLP), forming the shell that encapsulates the retrotransposons dimeric RNA genome. The particles are assembled from trimer-clustered units and there are holes in the capsid shells that allow for the diffusion of macromolecules. CA also has nucleocapsid-like chaperone activity, promoting primer tRNA(i)-Met annealing to the multipartite primer-binding site (PBS), dimerization of Ty1 RNA and initiation of reverse transcription. The polypeptide is Transposon Ty1-LR2 Gag polyprotein (TY1A-LR2) (Saccharomyces cerevisiae (strain ATCC 204508 / S288c) (Baker's yeast)).